The sequence spans 246 residues: MTNDTQRPSGRQANQLRDVRITRHYTKHAEGSVLVEFGDTKVICTASIAESVPSFLRDRGQGWLTAEYGMLPRATHTRSDREAARGKQTGRTQEIQRLIGRALRSVFDLEKLGARTLHIDCDVIQADGGTRTASITGAFVAAHDAVAKLLATGRIESSPITDYVAAISVGVYDGLPVLDLDYDEDSQCDTDMNVVMTGAGGFVEIQGTAEGVAFSRDEMNALLDLASDGINTLIAKQKAALEQKSE.

Phosphate contacts are provided by residues arginine 91 and 129 to 131 (GTR).

This sequence belongs to the RNase PH family. As to quaternary structure, homohexameric ring arranged as a trimer of dimers.

The catalysed reaction is tRNA(n+1) + phosphate = tRNA(n) + a ribonucleoside 5'-diphosphate. Phosphorolytic 3'-5' exoribonuclease that plays an important role in tRNA 3'-end maturation. Removes nucleotide residues following the 3'-CCA terminus of tRNAs; can also add nucleotides to the ends of RNA molecules by using nucleoside diphosphates as substrates, but this may not be physiologically important. Probably plays a role in initiation of 16S rRNA degradation (leading to ribosome degradation) during starvation. The chain is Ribonuclease PH from Paraburkholderia phytofirmans (strain DSM 17436 / LMG 22146 / PsJN) (Burkholderia phytofirmans).